The following is a 1748-amino-acid chain: RANBP2-like and GRIP domain-containing protein 1 (1748 aa).

Thr14 bears the Phosphothreonine mark. 3 TPR repeats span residues 51–84, 575–608, and 639–672; these read PRAHRFLGLLYELEENTEKAVECYRRSLELNPPQ, QKMGRGLNSSYDQQEYIGRSVHYWKKVLPLLKII, and EDAHITFAILDAVHGNIEDAVTAFESIKSVVSYW. Residues 751–796 are disordered; that stretch reads GPLYKNGSLRNADSEIKHSTPSPTKYSLSPSKSYKYSPKTPPRWAE. Positions 769–788 are enriched in low complexity; it reads STPSPTKYSLSPSKSYKYSP. The 137-residue stretch at 1021 to 1157 folds into the RanBD1 1 domain; it reads HFEPVVQMPE…FEECQRLLLD (137 aa). Disordered regions lie at residues 1198–1233 and 1291–1316; these read TKVTEEENKGSGTGAAGASDTTIKPNPENTGPTLEW and AKLNQSGTSVGTDEESDVTQEEERDG. Residues 1220–1229 show a composition bias toward polar residues; that stretch reads IKPNPENTGP. Positions 1302–1314 are enriched in acidic residues; that stretch reads TDEESDVTQEEER. The RanBD1 2 domain occupies 1318–1454; it reads YFEPVVPLPD…FDEAKTAQEK (137 aa). Residues 1565 to 1578 show a composition bias toward polar residues; that stretch reads NDSETSSVAQSGSE. Residues 1565 to 1606 are disordered; it reads NDSETSSVAQSGSESKVEPKKCELSKNSDIEQSSDSKVKNLS. The segment covering 1579–1602 has biased composition (basic and acidic residues); sequence SKVEPKKCELSKNSDIEQSSDSKV. The region spanning 1685 to 1735 is the GRIP domain; it reads QEESAANVEHLKNVLLQFIFLKPGSERESLLPVINTMLQLSPEEKGKLAAV.

This chain is RANBP2-like and GRIP domain-containing protein 1 (RGPD1), found in Homo sapiens (Human).